The sequence spans 362 residues: Serpentine receptor class epsilon-37 (362 aa).

Helical transmembrane passes span 29 to 49, 67 to 87, 127 to 147, 170 to 190, 204 to 224, 260 to 280, and 288 to 308; these read IFYV…YILV, IMMC…IVLI, IYFA…AVLA, IPIL…YQTT, IFIG…NLAW, LVVS…VLLF, and FFVH…SLTL.

This sequence belongs to the nematode receptor-like protein sre family.

It localises to the membrane. This Caenorhabditis elegans protein is Serpentine receptor class epsilon-37 (sre-37).